Here is a 574-residue protein sequence, read N- to C-terminus: Dihydroxy-acid dehydratase 2 (574 aa).

The disordered stretch occupies residues 1–20 (MNAKTNIKQRLPSRHVTEGP). Position 56 (Cys-56) interacts with [2Fe-2S] cluster. Position 88 (Asp-88) interacts with Mg(2+). Cys-129 is a binding site for [2Fe-2S] cluster. Mg(2+)-binding residues include Asp-130 and Lys-131. Lys-131 bears the N6-carboxylysine mark. Cys-201 contacts [2Fe-2S] cluster. Glu-451 contributes to the Mg(2+) binding site. Ser-477 serves as the catalytic Proton acceptor.

The protein belongs to the IlvD/Edd family. In terms of assembly, homodimer. The cofactor is [2Fe-2S] cluster. Mg(2+) is required as a cofactor.

The enzyme catalyses (2R)-2,3-dihydroxy-3-methylbutanoate = 3-methyl-2-oxobutanoate + H2O. It carries out the reaction (2R,3R)-2,3-dihydroxy-3-methylpentanoate = (S)-3-methyl-2-oxopentanoate + H2O. It participates in amino-acid biosynthesis; L-isoleucine biosynthesis; L-isoleucine from 2-oxobutanoate: step 3/4. Its pathway is amino-acid biosynthesis; L-valine biosynthesis; L-valine from pyruvate: step 3/4. In terms of biological role, functions in the biosynthesis of branched-chain amino acids. Catalyzes the dehydration of (2R,3R)-2,3-dihydroxy-3-methylpentanoate (2,3-dihydroxy-3-methylvalerate) into 2-oxo-3-methylpentanoate (2-oxo-3-methylvalerate) and of (2R)-2,3-dihydroxy-3-methylbutanoate (2,3-dihydroxyisovalerate) into 2-oxo-3-methylbutanoate (2-oxoisovalerate), the penultimate precursor to L-isoleucine and L-valine, respectively. The protein is Dihydroxy-acid dehydratase 2 of Bradyrhizobium diazoefficiens (strain JCM 10833 / BCRC 13528 / IAM 13628 / NBRC 14792 / USDA 110).